The following is a 407-amino-acid chain: Negative RAS protein regulator protein (407 aa).

Disordered regions lie at residues 51–94 (PRII…ARQI), 165–187 (HPSK…NLNF), and 241–273 (NNNN…NVFS). Over residues 55–73 (SSSNSNSNSNSNSNSNSNS) the composition is skewed to low complexity. The 69-residue stretch at 90–158 (SARQIRKKWK…QCHDRFKVLY (69 aa)) folds into the Myb-like domain. The span at 165–177 (HPSKKSKQKKKKS) shows a compositional bias: basic residues. Over residues 241 to 270 (NNNNNNINNSNNSNNNNSNNINRNSNHSTN) the composition is skewed to low complexity.

Its subcellular location is the nucleus. Its function is as follows. Negative regulator of the Ras-cyclic AMP pathway. Negatively regulate the activity of normal but not mutationally activated Ras proteins. The down-regulatory effect of RPI1 requires the presence of one of the two Ras GTPase activators, IRA1 and IRA2. The polypeptide is Negative RAS protein regulator protein (RPI1) (Saccharomyces cerevisiae (strain ATCC 204508 / S288c) (Baker's yeast)).